A 420-amino-acid chain; its full sequence is Transcription factor TCP4 (420 aa).

Positions 1-27 (MSDDQFHHPPPPSSMRHRSTSDAADGG) are disordered. The 59-residue stretch at 45 to 103 (RKDRHSKVCTAKGPRDRRVRLSAHTAIQFYDVQDRLGFDRPSKAVDWLIKKAKTSIDEL) folds into the TCP domain. Disordered regions lie at residues 121 to 176 (NAKP…PSMD), 228 to 256 (LSLQSFPDGPPSLLHHQHHHHTSASASEP), 353 to 379 (HQSISTDDLNHHHHLPPPVHQSAIPGI), and 399 to 420 (QEEEQHDGLTHKPSSASSISRH). A compositionally biased stretch (polar residues) spans 410–420 (KPSSASSISRH).

In terms of assembly, interacts with AHL27 and AHL29. Interacts with SPL. Interacts with JGB. Interacts with GI (via N-terminus). Expressed in cotyledons, particularly in the vascular region, in leaves, roots, buds, flowers and immature siliques.

Its subcellular location is the nucleus. In terms of biological role, transcription factor playing a pivotal role in the control of morphogenesis of shoot organs by negatively regulating the expression of boundary-specific genes such as CUC genes, probably through the induction of miRNA (e.g. miR164). Required during early steps of embryogenesis. Participates in ovule development. Activates LOX2 expression by binding to the 5'-GGACCA-3' motif found in its promoter. Activates YUC5 transcription by binding to the 5'-GTGGGCCA-3' motif found in its promoter. Through the activation of YUC5 transcription, integrates the auxin response to a brassinosteroid-dependent molecular circuit that promotes cell elongation in hypocotyls. Activates GIS transcription by binding to the 5'-TGGTCC-3' motif found in its promoter. Involved in the regulation of trichome branching through the activation of GIS transcription. Activates CO transcription by binding to the 5'-GGACCAC-3' motif found in its promoter. Involved in the regulation of photoperiodic flowering through the activation of CO transcription. Activates TCL1 and TCL2 transcription by binding to the 5'-TGGCCA-3' and 5'-GTGGACCA-3' motifS found in their respective promoters. Involved in the suppression of trichome initiaition through the activation of TCL1 and TCL2 transcription. Activates HAT2 transcription by binding to the 5'-TGGTCCAC-3' motif found in its promoter. Through the activation of HAT2 transcription, involved in the auxin-independent reprogramming of mitotic cells to exit division and acquire differentiation competence within the transition zone. The sequence is that of Transcription factor TCP4 (TCP4) from Arabidopsis thaliana (Mouse-ear cress).